A 466-amino-acid chain; its full sequence is Ribulose bisphosphate carboxylase large chain (466 aa).

The residue at position 5 (K5) is an N6,N6,N6-trimethyllysine. Residues N114 and T164 each coordinate substrate. K166 acts as the Proton acceptor in catalysis. K168 is a binding site for substrate. Mg(2+)-binding residues include K192, D194, and E195. K192 bears the N6-carboxylysine mark. H285 (proton acceptor) is an active-site residue. Positions 286, 318, and 370 each coordinate substrate.

This sequence belongs to the RuBisCO large chain family. Type I subfamily. In terms of assembly, heterohexadecamer of 8 large chains and 8 small chains; disulfide-linked. The disulfide link is formed within the large subunit homodimers. It depends on Mg(2+) as a cofactor. Post-translationally, the disulfide bond which can form in the large chain dimeric partners within the hexadecamer appears to be associated with oxidative stress and protein turnover.

Its subcellular location is the plastid. The protein resides in the chloroplast. It catalyses the reaction 2 (2R)-3-phosphoglycerate + 2 H(+) = D-ribulose 1,5-bisphosphate + CO2 + H2O. The enzyme catalyses D-ribulose 1,5-bisphosphate + O2 = 2-phosphoglycolate + (2R)-3-phosphoglycerate + 2 H(+). Its function is as follows. RuBisCO catalyzes two reactions: the carboxylation of D-ribulose 1,5-bisphosphate, the primary event in carbon dioxide fixation, as well as the oxidative fragmentation of the pentose substrate in the photorespiration process. Both reactions occur simultaneously and in competition at the same active site. The polypeptide is Ribulose bisphosphate carboxylase large chain (Caltha palustris (Yellow marsh marigold)).